A 395-amino-acid chain; its full sequence is Elongation factor Tu (395 aa).

Residues lysine 10 to glutamine 204 form the tr-type G domain. The G1 stretch occupies residues glycine 19–threonine 26. GTP is bound at residue glycine 19–threonine 26. Residue threonine 26 coordinates Mg(2+). The interval glycine 61–serine 65 is G2. The segment at aspartate 82–glycine 85 is G3. Residues aspartate 82–histidine 86 and asparagine 137–aspartate 140 each bind GTP. Residues asparagine 137–aspartate 140 are G4. The tract at residues serine 173–leucine 175 is G5.

The protein belongs to the TRAFAC class translation factor GTPase superfamily. Classic translation factor GTPase family. EF-Tu/EF-1A subfamily. As to quaternary structure, monomer.

It is found in the cytoplasm. It carries out the reaction GTP + H2O = GDP + phosphate + H(+). Its function is as follows. GTP hydrolase that promotes the GTP-dependent binding of aminoacyl-tRNA to the A-site of ribosomes during protein biosynthesis. This Agathobacter rectalis (strain ATCC 33656 / DSM 3377 / JCM 17463 / KCTC 5835 / VPI 0990) (Eubacterium rectale) protein is Elongation factor Tu.